We begin with the raw amino-acid sequence, 621 residues long: Polycystin-2-like protein 2 (621 aa).

The Cytoplasmic portion of the chain corresponds to 1–31 (MSEATWWYRGGTSKHDLHYRREAEVNTTLEE). A helical transmembrane segment spans residues 32 to 52 (LLLYFIFLINLCILTFGMVNP). The Extracellular portion of the chain corresponds to 53 to 277 (HMYYLNKVMS…SVKLLRYVSY (225 aa)). 2 N-linked (GlcNAc...) asparagine glycosylation sites follow: asparagine 115 and asparagine 138. A helical transmembrane segment spans residues 278 to 298 (YDYFIASCEVIFCIFLFVFII). The Cytoplasmic segment spans residues 299–314 (QELRKVNEFKSAYFRS). The helical transmembrane segment at 315 to 335 (VWNWLEMLLLLLCFLAVSFYA) threads the bilayer. At 336 to 360 (YCNMQSFLLLGQLLKNTDSYPDFYF) the chain is on the extracellular side. A helical transmembrane segment spans residues 361-381 (LAYWHIYYNNVIAITIFFAWI). The Cytoplasmic portion of the chain corresponds to 382–406 (KIFKFISFNETMSQLSSTLSRCMKD). A helical transmembrane segment spans residues 407-427 (IVGFAIMFFIIFSAYAQLGFL). The Extracellular portion of the chain corresponds to 428–468 (VFGSQVDDFSTFQNSIFAQFRIVLGDFNFAGIQQANWILGP). Residues 469-489 (IYFITFIFFVFFVLLNMFLAI) traverse the membrane as a helical segment. Residues 490 to 621 (INDTYSEVKA…KLNQLMRKLH (132 aa)) are Cytoplasmic-facing. Positions 521 to 551 (NVLEKLRLKKAQAKEEKKMQTTDLAQRARRD) form a coiled coil.

The protein belongs to the polycystin family. As to quaternary structure, interacts with TRPC1 and TRPC5. As to expression, expressed only in testis and heart.

The protein resides in the membrane. Exhibits a lower single conductance but no spontaneous channel activity. May function as a regulator of calcium channels or a channel component involving Ca2(+) homeostasis. In Mus musculus (Mouse), this protein is Polycystin-2-like protein 2.